A 217-amino-acid polypeptide reads, in one-letter code: tRNA (guanine-N(7)-)-methyltransferase (217 aa).

The S-adenosyl-L-methionine site is built by E44, E69, D96, and D118. D118 is an active-site residue. K122 contributes to the substrate binding site. An interaction with RNA region spans residues 124 to 129 (RHEKRR). Substrate is bound by residues D154 and 191-194 (TEYE).

Belongs to the class I-like SAM-binding methyltransferase superfamily. TrmB family.

It carries out the reaction guanosine(46) in tRNA + S-adenosyl-L-methionine = N(7)-methylguanosine(46) in tRNA + S-adenosyl-L-homocysteine. It functions in the pathway tRNA modification; N(7)-methylguanine-tRNA biosynthesis. Functionally, catalyzes the formation of N(7)-methylguanine at position 46 (m7G46) in tRNA. The protein is tRNA (guanine-N(7)-)-methyltransferase of Bacillus velezensis (strain DSM 23117 / BGSC 10A6 / LMG 26770 / FZB42) (Bacillus amyloliquefaciens subsp. plantarum).